Consider the following 477-residue polypeptide: Glycogen synthase (477 aa).

Lysine 15 serves as a coordination point for ADP-alpha-D-glucose.

The protein belongs to the glycosyltransferase 1 family. Bacterial/plant glycogen synthase subfamily.

The enzyme catalyses [(1-&gt;4)-alpha-D-glucosyl](n) + ADP-alpha-D-glucose = [(1-&gt;4)-alpha-D-glucosyl](n+1) + ADP + H(+). It functions in the pathway glycan biosynthesis; glycogen biosynthesis. Its function is as follows. Synthesizes alpha-1,4-glucan chains using ADP-glucose. In Salmonella arizonae (strain ATCC BAA-731 / CDC346-86 / RSK2980), this protein is Glycogen synthase.